The chain runs to 97 residues: Co-chaperonin GroES (97 aa).

Belongs to the GroES chaperonin family. As to quaternary structure, heptamer of 7 subunits arranged in a ring. Interacts with the chaperonin GroEL.

The protein localises to the cytoplasm. In terms of biological role, together with the chaperonin GroEL, plays an essential role in assisting protein folding. The GroEL-GroES system forms a nano-cage that allows encapsulation of the non-native substrate proteins and provides a physical environment optimized to promote and accelerate protein folding. GroES binds to the apical surface of the GroEL ring, thereby capping the opening of the GroEL channel. This chain is Co-chaperonin GroES, found in Wigglesworthia glossinidia brevipalpis.